The sequence spans 219 residues: uncharacterized protein (219 aa).

Belongs to the CIA30 family.

It is found in the cytoplasm. It localises to the nucleus. This is an uncharacterized protein from Schizosaccharomyces pombe (strain 972 / ATCC 24843) (Fission yeast).